Reading from the N-terminus, the 145-residue chain is Hemoglobin subunit beta (145 aa).

Residues 1 to 145 (MLTAEEKAAV…VANALAHRYH (145 aa)) enclose the Globin domain. Thr-11 carries the post-translational modification Phosphothreonine. Ser-43 carries the phosphoserine modification. The residue at position 58 (Lys-58) is an N6-acetyllysine. A heme b-binding site is contributed by His-62. Lys-81 is subject to N6-acetyllysine. Residue His-91 participates in heme b binding. Cys-92 is subject to S-nitrosocysteine.

This sequence belongs to the globin family. As to quaternary structure, heterotetramer of two alpha chains and two beta chains. Red blood cells.

Its function is as follows. Involved in oxygen transport from the lung to the various peripheral tissues. The protein is Hemoglobin subunit beta (HBB) of Bos gaurus frontalis (Domestic gayal).